We begin with the raw amino-acid sequence, 119 residues long: Large ribosomal subunit protein bL19 (119 aa).

It belongs to the bacterial ribosomal protein bL19 family.

In terms of biological role, this protein is located at the 30S-50S ribosomal subunit interface and may play a role in the structure and function of the aminoacyl-tRNA binding site. The chain is Large ribosomal subunit protein bL19 (rplS) from Mycoplasma genitalium (strain ATCC 33530 / DSM 19775 / NCTC 10195 / G37) (Mycoplasmoides genitalium).